A 227-amino-acid polypeptide reads, in one-letter code: PKHD-type hydroxylase Pden_4677 (227 aa).

The 101-residue stretch at 78 to 178 (HILPPMFNRY…RWASFFWAQS (101 aa)) folds into the Fe2OG dioxygenase domain. Positions 96, 98, and 159 each coordinate Fe cation. Residue R169 participates in 2-oxoglutarate binding.

The cofactor is Fe(2+). L-ascorbate is required as a cofactor.

The protein is PKHD-type hydroxylase Pden_4677 of Paracoccus denitrificans (strain Pd 1222).